The following is a 376-amino-acid chain: Putative phosphoserine aminotransferase (376 aa).

Residues 1–30 (MADQLTPSLDIPAALKPRDGRFGSGPSKVR) form a disordered region. L-glutamate is bound at residue Arg-50. Residues 84 to 85 (AT), Phe-108, Thr-154, Asp-176, and Gln-199 each bind pyridoxal 5'-phosphate. An N6-(pyridoxal phosphate)lysine modification is found at Lys-200. Residue 251–252 (NT) coordinates pyridoxal 5'-phosphate.

It belongs to the class-V pyridoxal-phosphate-dependent aminotransferase family. SerC subfamily. In terms of assembly, homodimer. Pyridoxal 5'-phosphate serves as cofactor.

Its subcellular location is the cytoplasm. The enzyme catalyses O-phospho-L-serine + 2-oxoglutarate = 3-phosphooxypyruvate + L-glutamate. It catalyses the reaction 4-(phosphooxy)-L-threonine + 2-oxoglutarate = (R)-3-hydroxy-2-oxo-4-phosphooxybutanoate + L-glutamate. It participates in amino-acid biosynthesis; L-serine biosynthesis; L-serine from 3-phospho-D-glycerate: step 2/3. Its pathway is cofactor biosynthesis; pyridoxine 5'-phosphate biosynthesis; pyridoxine 5'-phosphate from D-erythrose 4-phosphate: step 3/5. Its function is as follows. Catalyzes the reversible conversion of 3-phosphohydroxypyruvate to phosphoserine and of 3-hydroxy-2-oxo-4-phosphonooxybutanoate to phosphohydroxythreonine. The protein is Putative phosphoserine aminotransferase of Mycobacterium leprae (strain TN).